We begin with the raw amino-acid sequence, 587 residues long: Adenine deaminase (587 aa).

It belongs to the metallo-dependent hydrolases superfamily. Adenine deaminase family. Mn(2+) is required as a cofactor.

It carries out the reaction adenine + H2O + H(+) = hypoxanthine + NH4(+). The sequence is that of Adenine deaminase from Shewanella halifaxensis (strain HAW-EB4).